The primary structure comprises 59 residues: uncharacterized protein (59 aa).

2 helical membrane-spanning segments follow: residues 1 to 21 (MNMYWFLGALLYFLIGTYIFI) and 30 to 50 (GSWILLALAAPLIIAGYPYFY).

Its subcellular location is the cell membrane. This is an uncharacterized protein from Bacillus subtilis (strain 168).